The chain runs to 219 residues: Octanoyltransferase (219 aa).

In terms of domain architecture, BPL/LPL catalytic spans 34–209 (SESPDELWIV…TFSQLLGYQH (176 aa)). Residues 73–80 (RGGQVTYH), 140–142 (SLG), and 153–155 (GLA) contribute to the substrate site. Residue cysteine 171 is the Acyl-thioester intermediate of the active site.

This sequence belongs to the LipB family.

The protein resides in the cytoplasm. It carries out the reaction octanoyl-[ACP] + L-lysyl-[protein] = N(6)-octanoyl-L-lysyl-[protein] + holo-[ACP] + H(+). It participates in protein modification; protein lipoylation via endogenous pathway; protein N(6)-(lipoyl)lysine from octanoyl-[acyl-carrier-protein]: step 1/2. Functionally, catalyzes the transfer of endogenously produced octanoic acid from octanoyl-acyl-carrier-protein onto the lipoyl domains of lipoate-dependent enzymes. Lipoyl-ACP can also act as a substrate although octanoyl-ACP is likely to be the physiological substrate. The polypeptide is Octanoyltransferase (Shewanella putrefaciens (strain CN-32 / ATCC BAA-453)).